Reading from the N-terminus, the 51-residue chain is Large ribosomal subunit protein bL33 (51 aa).

The protein belongs to the bacterial ribosomal protein bL33 family.

The polypeptide is Large ribosomal subunit protein bL33 (Francisella philomiragia subsp. philomiragia (strain ATCC 25017 / CCUG 19701 / FSC 153 / O#319-036)).